A 350-amino-acid chain; its full sequence is Geranylgeranyl pyrophosphate synthase (350 aa).

Residues Lys66, Arg69, and His98 each coordinate isopentenyl diphosphate. Mg(2+)-binding residues include Asp105 and Asp109. Residue Arg114 coordinates dimethylallyl diphosphate. Residue Arg115 participates in isopentenyl diphosphate binding. Dimethylallyl diphosphate contacts are provided by Lys200, Thr201, Gln236, Asn243, and Lys263.

It belongs to the FPP/GGPP synthase family. It depends on Mg(2+) as a cofactor.

It carries out the reaction isopentenyl diphosphate + dimethylallyl diphosphate = (2E)-geranyl diphosphate + diphosphate. The enzyme catalyses isopentenyl diphosphate + (2E)-geranyl diphosphate = (2E,6E)-farnesyl diphosphate + diphosphate. It catalyses the reaction isopentenyl diphosphate + (2E,6E)-farnesyl diphosphate = (2E,6E,10E)-geranylgeranyl diphosphate + diphosphate. The protein operates within secondary metabolite biosynthesis; terpenoid biosynthesis. Geranylgeranyl pyrophosphate synthase; part of the gene cluster that mediates the biosynthesis of pleuromutilin, a tricyclic diterpene showing antibacterial properties. The geranylgeranyl diphosphate (GGPP) synthase ple4 catalyzes the first step in pleuromutilin biosynthesis. GGPP is then substrate of the premutilin synthase (PS) ple3 to yield premutilin. Premutilin synthase is a bifunctional enzyme composed of the fusion of a class II diterpene cyclase (DTC) and a class I diterpene synthase (DTS), with the corresponding domains and active sites containing characteristic aspartate-rich motifs. GGPP is first converted to mutildienyl-diphosphate (MPP) at the class II DTC site. MPP is subsequently further cyclized at the class I DTS site, followed by a 1,5-hydride shift and addition of water prior to terminating deprotonation, to yield premutilin. The cytochrome P450 monooxygenases ple5 and ple6 hydroxylate premutilin at C-11 and C-3, respectively, producing 11-hydroxypremutilin and 3-hydroxypremutilin. The combination of the actions of both ple5 and ple6 leads to the production of 3,11-dihydroxypremutilin. The short chain dehydrogenase ple7 further converts 3,11-dihydroxypremutilin into mutilin. The acetyltransferase ple2 then acetylates mutilin to produce 14-O-acetylmutilin. Finally, the cytochrome P450 monooxygenase ple1 catalyzes hydroxylation on the alpha position of the acetyl side chain of 14-O-acetylmutilin to yield pleuromutilin. The protein is Geranylgeranyl pyrophosphate synthase of Rhodocybe pseudopiperita (Clitopilus pseudopiperitus).